The sequence spans 80 residues: Conotoxin Cl9.5 (80 aa).

The N-terminal stretch at 1–23 (MNCYLILTVALLLTSAMTGTTTA) is a signal peptide. Residues 24-37 (GQLNTKGVTLREDD) constitute a propeptide that is removed on maturation. 3 disulfides stabilise this stretch: Cys42-Cys59, Cys47-Cys69, and Cys49-Cys74.

Expressed by the venom duct.

The protein resides in the secreted. The polypeptide is Conotoxin Cl9.5 (Californiconus californicus (California cone)).